A 456-amino-acid chain; its full sequence is Chordin-like protein 1 (456 aa).

The signal sequence occupies residues 1 to 27 (MRKKWKMGGMKYIFSLLFFLLLEGGKT). VWFC domains are found at residues 35 to 100 (TYCM…PRCP) and 113 to 179 (KSCE…RVCR). N-linked (GlcNAc...) asparagine glycosylation is present at N118. A Cell attachment site motif is present at residues 179–181 (RGD). Residues 202–223 (ARHSYHRSHYDPPPSRQAGGLS) form a disordered region. In terms of domain architecture, VWFC 3 spans 258–323 (QVCVSNGKTY…IDGKCCKVCP (66 aa)). An N-linked (GlcNAc...) asparagine glycan is attached at N291.

In terms of tissue distribution, expressed in the developing cornea and in the eye anterior segment in addition to the retina. Differentially expressed in the fetal brain. There is high expression in cerebellum and neocortex. Expressed in retinal pericytes.

The protein resides in the secreted. Its function is as follows. Antagonizes the function of BMP4 by binding to it and preventing its interaction with receptors. Alters the fate commitment of neural stem cells from gliogenesis to neurogenesis. Contributes to neuronal differentiation of neural stem cells in the brain by preventing the adoption of a glial fate. May play a crucial role in dorsoventral axis formation. May play a role in embryonic bone formation. May also play an important role in regulating retinal angiogenesis through modulation of BMP4 actions in endothelial cells. Plays a role during anterior segment eye development. The sequence is that of Chordin-like protein 1 (CHRDL1) from Homo sapiens (Human).